Consider the following 875-residue polypeptide: Serine/threonine-protein kinase D2 (875 aa).

A compositionally biased stretch (low complexity) spans 1–12; it reads MAAAPSHPAGLP. The disordered stretch occupies residues 1–35; it reads MAAAPSHPAGLPGSPGPGSPPPPGGLDLQSPPPLL. A compositionally biased stretch (pro residues) spans 14–35; the sequence is SPGPGSPPPPGGLDLQSPPPLL. The residue at position 30 (Ser30) is a Phosphoserine. Phosphotyrosine is present on Tyr87. The Phorbol-ester/DAG-type 1 zinc-finger motif lies at 138–188; the sequence is PHALTVHSYRAPAFCDHCGEMLFGLVRQGLKCDGCGLNYHKRCAFSIPNNC. A phosphoserine mark is found at Ser197, Ser198, Ser200, Ser203, Ser206, Ser211, Ser212, and Ser214. The disordered stretch occupies residues 224–247; the sequence is RSTTDLLPRRPPSSSSSSSSSSFY. Residues 236–245 show a composition bias toward low complexity; that stretch reads SSSSSSSSSS. Ser244 bears the Phosphoserine; by CSNK1D and CSNK1E mark. Ser245 carries the phosphoserine modification. A Phorbol-ester/DAG-type 2 zinc finger spans residues 265–315; that stretch reads PHTFLIHSYTRPTVCQACKKLLKGLFRQGLQCKDCKFNCHKRCATRVPNDC. Positions 332–374 are disordered; the sequence is DYSEADKSSISDELEDSGVIPGSHSESALHASEEEEGEGHKAQ. A PH domain is found at 398–510; the sequence is TTLREGWVVH…WETAIRQALM (113 aa). Position 408 is a phosphotyrosine (Tyr408). The residue at position 439 (Tyr439) is a Phosphotyrosine; by ABL1. Ser519 bears the Phosphoserine mark. Positions 552 to 808 constitute a Protein kinase domain; it reads IFPDEVLGSG…VDKSLSHPWL (257 aa). ATP contacts are provided by residues 558–566 and Lys581; that span reads LGSGQFGVV. Catalysis depends on Asp675, which acts as the Proton acceptor. At Ser707 the chain carries Phosphoserine; by PKC. The residue at position 711 (Ser711) is a Phosphoserine; by autocatalysis. Tyr718 bears the Phosphotyrosine; by ABL1 mark. The Important for ABL1-mediated Tyr-718 phosphorylation signature appears at 725-727; it reads LNQ. Ser873 is subject to Phosphoserine; by autocatalysis.

The protein belongs to the protein kinase superfamily. CAMK Ser/Thr protein kinase family. PKD subfamily. In terms of assembly, interacts (via C-terminus) with LCK. Interacts (via N-terminus and zing-finger domain 1 and 2) with PRKCD in response to oxidative stress; the interaction is independent of PRKD2 tyrosine phosphorylation. Requires Mg(2+) as cofactor. Post-translationally, phosphorylation of Ser-873 correlates with the activation status of the kinase. Ser-707 is probably phosphorylated by PKC. Phosphorylation at Ser-244 by CSNK1D and CSNK1E promotes nuclear localization and substrate targeting. Phosphorylation at Ser-244, Ser-707 and Ser-711 is required for nuclear localization. Phosphorylated at Tyr-438 by ABL1 in response to oxidative stress. Phosphorylated at Tyr-718 by ABL1 specifically in response to oxidative stress; requires prior phosphorylation at Ser-707 or/and Ser-711.

It localises to the cytoplasm. Its subcellular location is the cell membrane. The protein localises to the golgi apparatus. It is found in the trans-Golgi network. It catalyses the reaction L-seryl-[protein] + ATP = O-phospho-L-seryl-[protein] + ADP + H(+). It carries out the reaction L-threonyl-[protein] + ATP = O-phospho-L-threonyl-[protein] + ADP + H(+). With respect to regulation, activated by DAG and phorbol esters. Phorbol-ester/DAG-type domains bind DAG, mediating translocation to membranes. Autophosphorylation of Ser-711 and phosphorylation of Ser-707 by PKC relieves auto-inhibition by the PH domain. Catalytic activity is further increased by phosphorylation at Tyr-718 in response to oxidative stress. Serine/threonine-protein kinase that converts transient diacylglycerol (DAG) signals into prolonged physiological effects downstream of PKC, and is involved in the regulation of cell proliferation via MAPK1/3 (ERK1/2) signaling, oxidative stress-induced NF-kappa-B activation, inhibition of HDAC7 transcriptional repression, signaling downstream of T-cell antigen receptor (TCR) and cytokine production, and plays a role in Golgi membrane trafficking, angiogenesis, secretory granule release and cell adhesion. May potentiate mitogenesis induced by the neuropeptide bombesin by mediating an increase in the duration of MAPK1/3 (ERK1/2) signaling, which leads to accumulation of immediate-early gene products including FOS that stimulate cell cycle progression. In response to oxidative stress, is phosphorylated at Tyr-438 and Tyr-718 by ABL1, which leads to the activation of PRKD2 without increasing its catalytic activity, and mediates activation of NF-kappa-B. In response to the activation of the gastrin receptor CCKBR, is phosphorylated at Ser-244 by CSNK1D and CSNK1E, translocates to the nucleus, phosphorylates HDAC7, leading to nuclear export of HDAC7 and inhibition of HDAC7 transcriptional repression of NR4A1/NUR77. Upon TCR stimulation, is activated independently of ZAP70, translocates from the cytoplasm to the nucleus and is required for interleukin-2 (IL2) promoter up-regulation. During adaptive immune responses, is required in peripheral T-lymphocytes for the production of the effector cytokines IL2 and IFNG after TCR engagement and for optimal induction of antibody responses to antigens. In epithelial cells stimulated with lysophosphatidic acid (LPA), is activated through a PKC-dependent pathway and mediates LPA-stimulated interleukin-8 (IL8) secretion via a NF-kappa-B-dependent pathway. During TCR-induced T-cell activation, interacts with and is activated by the tyrosine kinase LCK, which results in the activation of the NFAT transcription factors. In the trans-Golgi network (TGN), regulates the fission of transport vesicles that are on their way to the plasma membrane and in polarized cells is involved in the transport of proteins from the TGN to the basolateral membrane. Plays an important role in endothelial cell proliferation and migration prior to angiogenesis, partly through modulation of the expression of KDR/VEGFR2 and FGFR1, two key growth factor receptors involved in angiogenesis. In secretory pathway, is required for the release of chromogranin-A (CHGA)-containing secretory granules from the TGN. Downstream of PRKCA, plays important roles in angiotensin-2-induced monocyte adhesion to endothelial cells. The sequence is that of Serine/threonine-protein kinase D2 (Prkd2) from Mus musculus (Mouse).